Here is a 253-residue protein sequence, read N- to C-terminus: Ubiquinone/menaquinone biosynthesis C-methyltransferase UbiE (253 aa).

S-adenosyl-L-methionine is bound by residues Thr76, Asp97, and 125–126 (NA).

The protein belongs to the class I-like SAM-binding methyltransferase superfamily. MenG/UbiE family.

The enzyme catalyses a 2-demethylmenaquinol + S-adenosyl-L-methionine = a menaquinol + S-adenosyl-L-homocysteine + H(+). The catalysed reaction is a 2-methoxy-6-(all-trans-polyprenyl)benzene-1,4-diol + S-adenosyl-L-methionine = a 5-methoxy-2-methyl-3-(all-trans-polyprenyl)benzene-1,4-diol + S-adenosyl-L-homocysteine + H(+). It participates in quinol/quinone metabolism; menaquinone biosynthesis; menaquinol from 1,4-dihydroxy-2-naphthoate: step 2/2. Its pathway is cofactor biosynthesis; ubiquinone biosynthesis. Its function is as follows. Methyltransferase required for the conversion of demethylmenaquinol (DMKH2) to menaquinol (MKH2) and the conversion of 2-polyprenyl-6-methoxy-1,4-benzoquinol (DDMQH2) to 2-polyprenyl-3-methyl-6-methoxy-1,4-benzoquinol (DMQH2). The chain is Ubiquinone/menaquinone biosynthesis C-methyltransferase UbiE from Rhodopseudomonas palustris (strain HaA2).